The following is a 62-amino-acid chain: Photosystem II reaction center protein Z (62 aa).

The next 2 membrane-spanning stretches (helical) occupy residues 8 to 28 (AVFA…LVFA) and 41 to 61 (FSGT…NSLI).

This sequence belongs to the PsbZ family. As to quaternary structure, PSII is composed of 1 copy each of membrane proteins PsbA, PsbB, PsbC, PsbD, PsbE, PsbF, PsbH, PsbI, PsbJ, PsbK, PsbL, PsbM, PsbT, PsbY, PsbZ, Psb30/Ycf12, at least 3 peripheral proteins of the oxygen-evolving complex and a large number of cofactors. It forms dimeric complexes.

It localises to the plastid. It is found in the chloroplast thylakoid membrane. May control the interaction of photosystem II (PSII) cores with the light-harvesting antenna, regulates electron flow through the 2 photosystem reaction centers. PSII is a light-driven water plastoquinone oxidoreductase, using light energy to abstract electrons from H(2)O, generating a proton gradient subsequently used for ATP formation. The chain is Photosystem II reaction center protein Z from Hordeum vulgare (Barley).